The following is a 639-amino-acid chain: Chaperone protein DnaK (639 aa).

Thr-198 is modified (phosphothreonine; by autocatalysis). Positions 597–639 are disordered; sequence AYSAGQSAEGAPHAAGAEASAQSRTDDGVVDADFEEVDEKKGH. The segment covering 603–617 has biased composition (low complexity); sequence SAEGAPHAAGAEASA. A compositionally biased stretch (acidic residues) spans 624–633; it reads GVVDADFEEV.

The protein belongs to the heat shock protein 70 family.

Its function is as follows. Acts as a chaperone. The chain is Chaperone protein DnaK from Rhodospirillum rubrum (strain ATCC 11170 / ATH 1.1.1 / DSM 467 / LMG 4362 / NCIMB 8255 / S1).